The following is a 353-amino-acid chain: UPF0283 membrane protein KPN78578_12740 (353 aa).

3 helical membrane-spanning segments follow: residues 70–90, 99–119, and 213–233; these read MVSA…VQWT, WIAL…VGSL, and ESTL…FIAW.

Belongs to the UPF0283 family.

Its subcellular location is the cell inner membrane. The polypeptide is UPF0283 membrane protein KPN78578_12740 (Klebsiella pneumoniae subsp. pneumoniae (strain ATCC 700721 / MGH 78578)).